The following is a 294-amino-acid chain: Glyceraldehyde-3-phosphate dehydrogenase (294 aa).

Aspartate 19, lysine 63, and threonine 105 together coordinate NAD(+). Residues 134-136 (SCT) and threonine 165 contribute to the D-glyceraldehyde 3-phosphate site. Catalysis depends on cysteine 135, which acts as the Nucleophile. The segment at 169 to 188 (KTVDGPSHKDWRGGRGASQN) is disordered. D-glyceraldehyde 3-phosphate contacts are provided by residues 194–195 (TG) and arginine 217.

The protein belongs to the glyceraldehyde-3-phosphate dehydrogenase family. In terms of assembly, homotetramer.

It is found in the cytoplasm. It carries out the reaction D-glyceraldehyde 3-phosphate + phosphate + NAD(+) = (2R)-3-phospho-glyceroyl phosphate + NADH + H(+). Its pathway is carbohydrate degradation; glycolysis; pyruvate from D-glyceraldehyde 3-phosphate: step 1/5. Catalyzes the oxidative phosphorylation of glyceraldehyde 3-phosphate (G3P) to 1,3-bisphosphoglycerate (BPG) using the cofactor NAD. The first reaction step involves the formation of a hemiacetal intermediate between G3P and a cysteine residue, and this hemiacetal intermediate is then oxidized to a thioester, with concomitant reduction of NAD to NADH. The reduced NADH is then exchanged with the second NAD, and the thioester is attacked by a nucleophilic inorganic phosphate to produce BPG. The protein is Glyceraldehyde-3-phosphate dehydrogenase (gap) of Serratia marcescens.